A 453-amino-acid chain; its full sequence is Glutamyl-tRNA reductase (453 aa).

Substrate is bound by residues 50–53, serine 110, 115–117, and glutamine 121; these read TCNR and EPQ. Cysteine 51 acts as the Nucleophile in catalysis. Position 190-195 (190-195) interacts with NADP(+); it reads GAGEMA. The span at 423–436 shows a compositional bias: basic and acidic residues; that stretch reads REKVPTDAHADRKP. The interval 423 to 453 is disordered; that stretch reads REKVPTDAHADRKPPNFAETSDDFDVTDASE. Acidic residues predominate over residues 442–453; it reads TSDDFDVTDASE.

This sequence belongs to the glutamyl-tRNA reductase family. As to quaternary structure, homodimer.

It catalyses the reaction (S)-4-amino-5-oxopentanoate + tRNA(Glu) + NADP(+) = L-glutamyl-tRNA(Glu) + NADPH + H(+). The protein operates within porphyrin-containing compound metabolism; protoporphyrin-IX biosynthesis; 5-aminolevulinate from L-glutamyl-tRNA(Glu): step 1/2. Its function is as follows. Catalyzes the NADPH-dependent reduction of glutamyl-tRNA(Glu) to glutamate 1-semialdehyde (GSA). The protein is Glutamyl-tRNA reductase of Solidesulfovibrio magneticus (strain ATCC 700980 / DSM 13731 / RS-1) (Desulfovibrio magneticus).